A 141-amino-acid polypeptide reads, in one-letter code: Large ribosomal subunit protein uL11 (141 aa).

This sequence belongs to the universal ribosomal protein uL11 family. As to quaternary structure, part of the ribosomal stalk of the 50S ribosomal subunit. Interacts with L10 and the large rRNA to form the base of the stalk. L10 forms an elongated spine to which L12 dimers bind in a sequential fashion forming a multimeric L10(L12)X complex. In terms of processing, one or more lysine residues are methylated.

In terms of biological role, forms part of the ribosomal stalk which helps the ribosome interact with GTP-bound translation factors. This is Large ribosomal subunit protein uL11 from Exiguobacterium sp. (strain ATCC BAA-1283 / AT1b).